A 294-amino-acid polypeptide reads, in one-letter code: uncharacterized protein (294 aa).

This is an uncharacterized protein from Halobacterium salinarum (strain ATCC 700922 / JCM 11081 / NRC-1) (Halobacterium halobium).